Consider the following 160-residue polypeptide: CXXC motif containing zinc binding protein (160 aa).

Zn(2+)-binding residues include C33, C36, C67, and C70. S75 carries the post-translational modification Phosphoserine.

This sequence belongs to the UPF0587 family. As to quaternary structure, monomer.

This chain is CXXC motif containing zinc binding protein (Czib), found in Mus musculus (Mouse).